The chain runs to 520 residues: Probable E3 ubiquitin-protein ligase rbrA (520 aa).

Acidic residues predominate over residues 1–42 (MTDDEMYEDYDVDDDSAEESGNESLDDTEYDDAATQEFDFDE). The segment at 1 to 51 (MTDDEMYEDYDVDDDSAEESGNESLDDTEYDDAATQEFDFDENQPQRSLGK) is disordered. The TRIAD supradomain stretch occupies residues 135 to 354 (GNVSCLICLE…GGYYNCNKYD (220 aa)). Residues Cys139, Cys142, Cys156, His158, Cys161, Cys164, Cys184, Cys189, Cys228, Cys233, Cys250, Cys252, Cys257, Cys260, His268, Cys273, Cys300, and Cys303 each contribute to the Zn(2+) site. The RING-type 1 zinc finger occupies 139–189 (CLICLEDYPPTQTFALICNHRYCLPCYKNYLEIKVSEGPECIYTPCPAPKC). The IBR-type zinc-finger motif lies at 208-273 (ERFNNFILKS…EIGDHMPCPC (66 aa)). The RING-type 2; atypical zinc-finger motif lies at 300 to 333 (CPECRSPIEKNGGCMHMTCRKNAGGCGFEFCWLC). Residue Cys313 is part of the active site. Positions 318, 325, 330, 333, 340, and 350 each coordinate Zn(2+).

This sequence belongs to the RBR family.

The catalysed reaction is [E2 ubiquitin-conjugating enzyme]-S-ubiquitinyl-L-cysteine + [acceptor protein]-L-lysine = [E2 ubiquitin-conjugating enzyme]-L-cysteine + [acceptor protein]-N(6)-ubiquitinyl-L-lysine.. Its pathway is protein modification; protein ubiquitination. In terms of biological role, might act as an E3 ubiquitin-protein ligase. Appears to be required for normal cell-type proportioning and cell sorting during multicellular development. In addition to being necessary for a normal percentage of prestalk cells and the organization of the slug, rbrA is also necessary for spore cell viability. The protein is Probable E3 ubiquitin-protein ligase rbrA (rbrA) of Dictyostelium discoideum (Social amoeba).